The sequence spans 654 residues: Dystrobrevin beta (654 aa).

N-acetylmethionine is present on Met-1. Thr-11, Thr-69, Thr-179, and Thr-212 each carry phosphothreonine. A ZZ-type zinc finger spans residues 238–294; the sequence is FHPVECSYCHCESMMGFRYRCQQCHNYQLCQNCFWRGHAGGPHSNQHQMKELSSWKS. Zn(2+)-binding residues include Cys-243, Cys-246, Cys-258, Cys-261, Cys-267, Cys-270, His-280, and His-284. Residue Ser-394 is modified to Phosphoserine. A syntrophin-binding region region spans residues 399 to 448; the sequence is DEEHRLIARYAARLAAEAGNMTRPPTDASFNFDANKQQRQLIAELENKNR. At Thr-424 the chain carries Phosphothreonine. Positions 429–519 form a coiled coil; sequence NFDANKQQRQ…LEGLMKLLKA (91 aa). A disordered region spans residues 520 to 562; it reads QATGSPHTSPTHGGGRSMPMPVRSTSAGSTPTHGPQDSLSGVG. Polar residues-rich tracts occupy residues 521–530 and 542–558; these read ATGSPHTSPT and RSTS…QDSL.

The protein belongs to the dystrophin family. Dystrobrevin subfamily. As to quaternary structure, interacts with dystrophin short form DP71 and syntrophins SNTG1 and SNTG2. Binds DTNBP1. Forms a specific complex composed of DMD, SNTB2 and SNTA1 in neuron; the interaction with SNTB2 and SNTA1 is DMD independent. Interacts with UTRN and dystrophin short form DP71 in the kidney and liver. Interacts with SNTB1, SNTB2 and SNTA1 in kidney and liver. Interacts with KIF5A. Interacts with HMG20A and HMG20B. Interacts with OLFM1. Interacts with PRKAR2B and PRKAR1A. Post-translationally, phosphorylated by PKA. Phosphorylation at Thr-11 alters the interaction with KIF5A. As to expression, expressed in neurons. In the isocortex, expressed most prominently in the somata (including the nuclei) and the dendrites of the pyramidal cells. Expressed in the hippocampus CA1, CA2, and CA3 neurons, namely in the initial segments of dendrites. Expressed in the Purkinje cells, molecular layer interneurons, and granule cells of cerebellum. Expressed in axon fascicles associated with the spinal trigeminal tract and in the internal capsule in the brainstem.

The protein resides in the cytoplasm. The protein localises to the postsynaptic density. It is found in the cell projection. Its subcellular location is the dendrite. It localises to the basal cell membrane. The protein resides in the postsynapse. The protein localises to the nucleus. In terms of biological role, scaffolding protein that assembles DMD and SNTA1 molecules to the basal membrane of kidney cells and liver sinusoids. May function as a repressor of the SYN1 promoter through the binding of repressor element-1 (RE-1), in turn regulates SYN1 expression and may be involved in cell proliferation regulation during the early phase of neural differentiation. May be required for proper maturation and function of a subset of inhibitory synapses. This chain is Dystrobrevin beta, found in Rattus norvegicus (Rat).